We begin with the raw amino-acid sequence, 237 residues long: MQFPSLSCGILIKRYKRFLADILLPNGEQITLHCPNTGAMTGCATAGDTVWFSTSDNPKRKYAHTWELTQTQAGDFICVNTQRANQLVQEALEKRWIAELAEYQTVLPEQKYGSENSRIDFLLKADNQPDCFVEVKSTTLLTENGLGMFPDAKTERGQKHLRELAAIAESGQQAVIFFAILHTGIQRFAVAKQIDPQYAALFEQAKNTGVKVLAYKAQIELVQGKPEAMNLQFSCEI.

The protein belongs to the SfsA family.

This Actinobacillus pleuropneumoniae serotype 3 (strain JL03) protein is Sugar fermentation stimulation protein homolog.